Consider the following 334-residue polypeptide: MRDPVTGFVYPAAWVEKVSDPAGLEKVRGGSAVLTSSGTVLLRGYTTGTTAAAACKAAILSLAGDISRVTIQLPCGLSADLPVKARAGHASCRKYAGDYPSDVTAGIEFIADAAVAQKGILLVPGPGIGHFVRDTPRYKKREPAISTAPLACILSSMEEALGATGLSGATVTLSIPEGRTIADQTLNPRIGIEGGISVLGSTGLVEPWDDHLEDSVIARVAGATDPVITTGRVGLRYARLLFPDREVVLAGGKIKGALAAAKGEVTLCGLPALILKYIEPHILDKTGYATVEELAASPSFPSVALPILVAYKKKHPRVRVVLVNREGTVIAESP.

Belongs to the CbiD family.

The enzyme catalyses Co-precorrin-5B + S-adenosyl-L-methionine = Co-precorrin-6A + S-adenosyl-L-homocysteine. It participates in cofactor biosynthesis; adenosylcobalamin biosynthesis; cob(II)yrinate a,c-diamide from sirohydrochlorin (anaerobic route): step 6/10. Catalyzes the methylation of C-1 in cobalt-precorrin-5B to form cobalt-precorrin-6A. This is Cobalt-precorrin-5B C(1)-methyltransferase from Methanoregula boonei (strain DSM 21154 / JCM 14090 / 6A8).